The primary structure comprises 378 residues: Putative F-box/kelch-repeat protein At3g43710 (378 aa).

The F-box domain maps to 23–69; that stretch reads TFGIEMLPDDLVLSCLARVPRMYYPILSLVSKRFRSFLTSTELYQTR. 3 Kelch repeats span residues 130–176, 178–227, and 262–308; these read NIYV…VLDG, IYVA…GYDG, and SQCV…VPTK.

This Arabidopsis thaliana (Mouse-ear cress) protein is Putative F-box/kelch-repeat protein At3g43710.